The sequence spans 987 residues: uncharacterized protein (987 aa).

The next 2 helical transmembrane spans lie at 12–32 and 958–978; these read FIYL…SVSG and VENN…LGIL.

To M.jannaschii MJ1393 and A.fulgidus AF2028.

It is found in the cell membrane. This is an uncharacterized protein from Methanocaldococcus jannaschii (strain ATCC 43067 / DSM 2661 / JAL-1 / JCM 10045 / NBRC 100440) (Methanococcus jannaschii).